We begin with the raw amino-acid sequence, 276 residues long: C-type lectin domain family 12 member B (276 aa).

Residues 1–43 lie on the Cytoplasmic side of the membrane; the sequence is MSEEVTYATLTFQDSAGARNNRDGNNLRKRGHPAPSPIWRHAA. Positions 5–10 match the ITIM motif motif; sequence VTYATL. Residue Tyr7 is modified to Phosphotyrosine. The helical; Signal-anchor for type II membrane protein transmembrane segment at 44 to 64 threads the bilayer; sequence LGLVTLCLMLLIGLVTLGMMF. Residues 65–276 lie on the Extracellular side of the membrane; it reads LQISNDINSD…AAPVKTEDLD (212 aa). Residues Asn91, Asn176, and Asn237 are each glycosylated (N-linked (GlcNAc...) asparagine). The 115-residue stretch at 150-264 folds into the C-type lectin domain; sequence YQNSCYYFTT…CSAEIFWICE (115 aa). 2 disulfide bridges follow: Cys172–Cys263 and Cys242–Cys255.

In terms of assembly, homodimer. Interacts (via ITIM motif) with PTPN6. Interacts (via ITIM motif) with PTPN11; this interaction triggers dephosphorylation and activation of PTPN11. N-glycosylated. Detected in colon, heart, kidney, liver, lung, mammary gland, ovary, spleen and testis. Expressed in melanocytes (at protein level).

It is found in the cell membrane. Inhibitory receptor postulated to negatively regulate immune and non-immune functions. Upon phosphorylation, recruits SH2 domain-containing PTPN6 and PTPN11 phosphatases to its ITIM motif and antagonizes activation signals. Although it inhibits KLRK1/NKG2D-mediated signaling, it does not bind known ligands of KLRK1/NKG2D and therefore is not its inhibitory counterpart. May limit activation of myeloid cell subsets in response to infection or tissue inflammation. May protect target cells against natural killer cell-mediated lysis. May negatively regulate cell cycle and differentiation of melanocytes via inactivation of STAT3. The protein is C-type lectin domain family 12 member B of Homo sapiens (Human).